We begin with the raw amino-acid sequence, 342 residues long: MNTADFDFHLPEELIAQTPLEKRDASKLLIVNRETGEMQDKHFHSIIDMLEPGDALVMNDTRVLPARLYGQKVETGGHVELLLLKNTSGDXWEVLAKPAKRLKVGTRISFGDGRLSAVVTEELTHGGRIVRFEYQGIFLEVLESLGEMPLPPYIHEKLDDRERYQTVYAKESGSAAAPTAGLHFTKELLAEIQAKGVHLVYLTLHVGLGTFRPVSVDNLDEHEMHSEFYQLSEEAAATLRSVKENGGRVIAVGTTSIRTLETIGSKFDGQIQADSGWTNIFIKPGYEWKVVDAFSTNFHLPKSTLVMLVSAFAGRELVLDAYHHAIQEHYRFFSFGDAMFIY.

This sequence belongs to the QueA family. In terms of assembly, monomer.

It is found in the cytoplasm. It catalyses the reaction 7-aminomethyl-7-carbaguanosine(34) in tRNA + S-adenosyl-L-methionine = epoxyqueuosine(34) in tRNA + adenine + L-methionine + 2 H(+). It functions in the pathway tRNA modification; tRNA-queuosine biosynthesis. Functionally, transfers and isomerizes the ribose moiety from AdoMet to the 7-aminomethyl group of 7-deazaguanine (preQ1-tRNA) to give epoxyqueuosine (oQ-tRNA). The chain is S-adenosylmethionine:tRNA ribosyltransferase-isomerase from Streptococcus pneumoniae serotype 19F (strain G54).